The chain runs to 176 residues: Ribosome maturation factor RimM (176 aa).

The 76-residue stretch at K99–N174 folds into the PRC barrel domain.

Belongs to the RimM family. As to quaternary structure, binds ribosomal protein uS19.

It localises to the cytoplasm. In terms of biological role, an accessory protein needed during the final step in the assembly of 30S ribosomal subunit, possibly for assembly of the head region. Essential for efficient processing of 16S rRNA. May be needed both before and after RbfA during the maturation of 16S rRNA. It has affinity for free ribosomal 30S subunits but not for 70S ribosomes. The chain is Ribosome maturation factor RimM from Leptospira borgpetersenii serovar Hardjo-bovis (strain JB197).